The sequence spans 467 residues: Xanthan biosynthesis protein XanB (467 aa).

This sequence belongs to the mannose-6-phosphate isomerase type 2 family.

It catalyses the reaction D-mannose 6-phosphate = D-fructose 6-phosphate. It carries out the reaction alpha-D-mannose 1-phosphate + GTP + H(+) = GDP-alpha-D-mannose + diphosphate. It participates in nucleotide-sugar biosynthesis; GDP-alpha-D-mannose biosynthesis; GDP-alpha-D-mannose from alpha-D-mannose 1-phosphate (GTP route): step 1/1. It functions in the pathway nucleotide-sugar biosynthesis; GDP-alpha-D-mannose biosynthesis; alpha-D-mannose 1-phosphate from D-fructose 6-phosphate: step 1/2. Its function is as follows. Involved in xanthan production. This Xanthomonas campestris pv. campestris (strain ATCC 33913 / DSM 3586 / NCPPB 528 / LMG 568 / P 25) protein is Xanthan biosynthesis protein XanB (xanB).